Here is a 310-residue protein sequence, read N- to C-terminus: Pantothenate kinase (310 aa).

95-102 (GSVAVGKS) is an ATP binding site.

It belongs to the prokaryotic pantothenate kinase family.

It is found in the cytoplasm. It carries out the reaction (R)-pantothenate + ATP = (R)-4'-phosphopantothenate + ADP + H(+). It functions in the pathway cofactor biosynthesis; coenzyme A biosynthesis; CoA from (R)-pantothenate: step 1/5. The chain is Pantothenate kinase from Mycobacteroides abscessus (strain ATCC 19977 / DSM 44196 / CCUG 20993 / CIP 104536 / JCM 13569 / NCTC 13031 / TMC 1543 / L948) (Mycobacterium abscessus).